The following is a 293-amino-acid chain: Ribosomal protein L11 methyltransferase (293 aa).

Positions 145, 166, 188, and 230 each coordinate S-adenosyl-L-methionine.

It belongs to the methyltransferase superfamily. PrmA family.

Its subcellular location is the cytoplasm. It catalyses the reaction L-lysyl-[protein] + 3 S-adenosyl-L-methionine = N(6),N(6),N(6)-trimethyl-L-lysyl-[protein] + 3 S-adenosyl-L-homocysteine + 3 H(+). In terms of biological role, methylates ribosomal protein L11. In Salmonella heidelberg (strain SL476), this protein is Ribosomal protein L11 methyltransferase.